The following is a 472-amino-acid chain: Probable endopolygalacturonase D (472 aa).

The signal sequence occupies residues 1-16; sequence MKRGALLVPFVPLALA. Asparagine 24 carries N-linked (GlcNAc...) asparagine glycosylation. Cysteine 129 and cysteine 144 are disulfide-bonded. 3 PbH1 repeats span residues 236–258, 259–297, and 298–319; these read MYYS…DIEH, TENL…DIKS, and STNL…AVSS. Asparagine 300 carries N-linked (GlcNAc...) asparagine glycosylation. Aspartate 312 functions as the Proton donor in the catalytic mechanism. Cysteines 314 and 330 form a disulfide. Histidine 334 is a catalytic residue. PbH1 repeat units follow at residues 349-370, 378-400, 412-433, and 444-467; these read VDGV…RIKS, VSNI…DIQQ, TNGV…SDGK, and CSNF…YPTD. Asparagine 361, asparagine 385, and asparagine 419 each carry an N-linked (GlcNAc...) asparagine glycan. Disulfide bonds link cysteine 439–cysteine 444 and cysteine 462–cysteine 469.

It belongs to the glycosyl hydrolase 28 family.

It localises to the secreted. The enzyme catalyses (1,4-alpha-D-galacturonosyl)n+m + H2O = (1,4-alpha-D-galacturonosyl)n + (1,4-alpha-D-galacturonosyl)m.. Functionally, involved in maceration and soft-rotting of plant tissue. Hydrolyzes the 1,4-alpha glycosidic bonds of de-esterified pectate in the smooth region of the plant cell wall. The protein is Probable endopolygalacturonase D (pgaD) of Neosartorya fischeri (strain ATCC 1020 / DSM 3700 / CBS 544.65 / FGSC A1164 / JCM 1740 / NRRL 181 / WB 181) (Aspergillus fischerianus).